A 106-amino-acid polypeptide reads, in one-letter code: NADH-quinone oxidoreductase subunit K (106 aa).

Helical transmembrane passes span 10 to 30 (IHYY…GVMV), 35 to 55 (VLIF…FVTF), and 67 to 87 (VVFF…AIVI).

Belongs to the complex I subunit 4L family. As to quaternary structure, NDH-1 is composed of 14 different subunits. Subunits NuoA, H, J, K, L, M, N constitute the membrane sector of the complex.

Its subcellular location is the cell inner membrane. It carries out the reaction a quinone + NADH + 5 H(+)(in) = a quinol + NAD(+) + 4 H(+)(out). Functionally, NDH-1 shuttles electrons from NADH, via FMN and iron-sulfur (Fe-S) centers, to quinones in the respiratory chain. The immediate electron acceptor for the enzyme in this species is believed to be ubiquinone. Couples the redox reaction to proton translocation (for every two electrons transferred, four hydrogen ions are translocated across the cytoplasmic membrane), and thus conserves the redox energy in a proton gradient. This is NADH-quinone oxidoreductase subunit K from Leptospira interrogans serogroup Icterohaemorrhagiae serovar copenhageni (strain Fiocruz L1-130).